Consider the following 295-residue polypeptide: Host-inducible protein A (295 aa).

Residues 1 to 20 (MHLDRSDSNGGSSRYTLDHE) are disordered.

Belongs to the NopP family.

This Rhizobium fredii (Sinorhizobium fredii) protein is Host-inducible protein A.